Reading from the N-terminus, the 297-residue chain is tRNA uridine(34) hydroxylase (297 aa).

Positions 133 to 228 constitute a Rhodanese domain; that stretch reads SGDEVVFFDG…YGETFKDQGL (96 aa). Cysteine 188 serves as the catalytic Cysteine persulfide intermediate.

It belongs to the TrhO family.

It carries out the reaction uridine(34) in tRNA + AH2 + O2 = 5-hydroxyuridine(34) in tRNA + A + H2O. Functionally, catalyzes oxygen-dependent 5-hydroxyuridine (ho5U) modification at position 34 in tRNAs. The polypeptide is tRNA uridine(34) hydroxylase (Pseudarthrobacter chlorophenolicus (strain ATCC 700700 / DSM 12829 / CIP 107037 / JCM 12360 / KCTC 9906 / NCIMB 13794 / A6) (Arthrobacter chlorophenolicus)).